The chain runs to 642 residues: Uromodulin (642 aa).

Residues Met-1–Ile-26 form the signal peptide. Positions Arg-32 to Glu-64 constitute an EGF-like 1 domain. Disulfide bonds link Cys-34/Cys-43, Cys-37/Cys-52, Cys-54/Cys-65, Cys-71/Cys-85, Cys-79/Cys-94, Cys-96/Cys-108, Cys-114/Cys-128, Cys-122/Cys-137, Cys-139/Cys-150, Cys-152/Cys-163, Cys-157/Cys-172, Cys-176/Cys-269, Cys-197/Cys-284, Cys-219/Cys-257, Cys-225/Cys-289, Cys-250/Cys-258, Cys-299/Cys-308, Cys-302/Cys-317, Cys-319/Cys-348, Cys-336/Cys-426, and Cys-367/Cys-390. N-linked (GlcNAc...) asparagine glycosylation is present at Asn-40. The 43-residue stretch at Asp-67–Ile-109 folds into the EGF-like 2; calcium-binding domain. The N-linked (GlcNAc...) asparagine glycan is linked to Asn-78. The EGF-like 3; calcium-binding domain maps to Asp-110–Glu-151. A glycan (N-linked (GlcNAc...) asparagine) is linked at Asn-134. Residues Cys-152–Ala-173 are beta hairpin. The interval Asp-174–Thr-293 is D10C. 2 N-linked (GlcNAc...) asparagine glycosylation sites follow: Asn-234 and Asn-246. N-linked (GlcNAc...) asparagine glycosylation occurs at Asn-277. Residues Ser-294–Val-325 form the EGF-like 4 domain. N-linked (GlcNAc...) asparagine glycosylation is present at Asn-324. A ZP-N region spans residues Glu-335–Leu-430. In terms of domain architecture, ZP spans Glu-335 to Ser-590. N-linked (GlcNAc...) asparagine glycosylation is found at Asn-397 and Asn-448. Residues Asp-431–Thr-454 form a flexible ZP-N/ZP-C linker; important for secretion and polymerization into filaments region. Residues Gly-455–Gln-465 form an internal hydrophobic patch (IHP) region. The segment at Gly-455–Ser-590 is ZP-C. 3 disulfides stabilise this stretch: Cys-507–Cys-567, Cys-528–Cys-583, and Cys-572–Cys-579. N-linked (GlcNAc...) asparagine glycosylation is present at Asn-514. Positions Arg-587–Ser-590 are essential for cleavage by HPN. Positions Val-599–Arg-607 are external hydrophobic patch (EHP); regulates polymerization into filaments. Ser-620 carries GPI-anchor amidated serine lipidation. The propeptide at Ser-621–Gln-642 is removed in mature form.

Homodimer that then polymerizes into long filaments. The filaments can additionally assemble laterally to form a sheet. The filaments consist of a zigzag-shaped backbone with laterally protruding arms which interact with bacterial adhesin fimH. Two fimH molecules can bind to a single UMOD monomer. In terms of processing, N-glycosylated. Post-translationally, proteolytically cleaved at a conserved C-terminal proteolytic cleavage site to generate the secreted form found in urine. This cleavage is catalyzed by HPN. In terms of tissue distribution, detected in kidney and pancreas.

The protein localises to the apical cell membrane. It is found in the basolateral cell membrane. Its subcellular location is the cell projection. The protein resides in the cilium membrane. It localises to the secreted. Functionally, functions in biogenesis and organization of the apical membrane of epithelial cells of the thick ascending limb of Henle's loop (TALH), where it promotes formation of complex filamentous gel-like structure that may play a role in the water barrier permeability. May serve as a receptor for binding and endocytosis of cytokines (IL-1, IL-2) and TNF. Facilitates neutrophil migration across renal epithelia. Its function is as follows. In the urine, may contribute to colloid osmotic pressure, retards passage of positively charged electrolytes, and inhibits formation of liquid containing supersaturated salts and subsequent formation of salt crystals. Protects against urinary tract infections by binding to type 1 fimbriated E.coli. Binds to bacterial adhesin fimH which mediates the stable formation of bacterial aggregates, prevents the binding of E.coli to uroplakins UPK1A and UPK1B which act as urothelial receptors for type I fimbriae, and allows for pathogen clearance through micturation. Also promotes aggregation of other bacteria including K.pneumoniae, P.aeruginosa and S.mitis and so may also protect against other uropathogens. The chain is Uromodulin (UMOD) from Canis lupus familiaris (Dog).